A 1157-amino-acid chain; its full sequence is Hephaestin (1157 aa).

An N-terminal signal peptide occupies residues M1–S18. Over I19–S1109 the chain is Extracellular. 6 consecutive Plastocyanin-like domains span residues A24–C206, Q218–C366, P370–C559, K569–C717, A730–C902, and N910–E1066. 2 N-linked (GlcNAc...) asparagine glycosylation sites follow: N49 and N54. Na(+) is bound by residues G70 and Y73. H126 and H128 together coordinate Cu(2+). H126 lines the O2 pocket. The Ca(2+) site is built by K134, D152, and D153. N-linked (GlcNAc...) asparagine glycosylation is present at N164. Residues C180 and C206 are joined by a disulfide bond. 2 residues coordinate Cu(2+): H186 and H188. H186 is a binding site for O2. The N-linked (GlcNAc...) asparagine glycan is linked to N236. S265 serves as a coordination point for Na(+). A disulfide bridge connects residues C285 and C366. Cu(2+)-binding residues include H304, C347, and H352. Na(+) is bound by residues Y416, G425, and Y428. A disulfide bridge connects residues C533 and C559. N587 carries an N-linked (GlcNAc...) asparagine glycan. Na(+) is bound at residue S616. C636 and C717 are joined by a disulfide. Residues H655, C698, H703, and M708 each contribute to the Cu(2+) site. Residues N713 and N757 are each glycosylated (N-linked (GlcNAc...) asparagine). Na(+) contacts are provided by F768 and G777. Cysteines 876 and 902 form a disulfide. N930 is a glycosylation site (N-linked (GlcNAc...) asparagine). Cu(2+)-binding residues include H999, H1002, H1004, H1044, C1045, H1046, H1050, and M1055. Residues H1002 and H1004 each coordinate O2. An O2-binding site is contributed by H1046. A helical transmembrane segment spans residues A1110 to W1130. Residues Y1131–Q1157 lie on the Cytoplasmic side of the membrane. Phosphoserine is present on residues S1144, S1149, and S1154.

The protein belongs to the multicopper oxidase family. Part of a complex composed of SLC40A1/ferroportin, TF/transferrin and HEPH/hephaestin that transfers iron from cells to transferrin. Cu cation serves as cofactor.

It is found in the basolateral cell membrane. It carries out the reaction 4 Fe(2+) + O2 + 4 H(+) = 4 Fe(3+) + 2 H2O. Plasma membrane ferroxidase that mediates the extracellular conversion of ferrous/Fe(2+) iron into its ferric/Fe(3+) form. Couples ferroportin which specifically exports ferrous/Fe(2+) iron from cells to transferrin that only binds and shuttles extracellular ferric/Fe(3+) iron throughout the body. By helping iron transfer from cells to blood mainly contributes to dietary iron absorption by the intestinal epithelium and more generally regulates iron levels in the body. The chain is Hephaestin from Mus musculus (Mouse).